The chain runs to 1186 residues: DNA excision repair protein ERCC-5 (1186 aa).

Residues 1–78 (MGVQGLWKLL…RIRPIFVFDG (78 aa)) are N-domain. Lys-8 is modified (N6-acetyllysine). Asp-30 contributes to the Mg(2+) binding site. The interval 31-67 (ISIWLNQALKGVRDRHGNSIENPHLLTLFHRLCKLLF) is DNA-binding; may bind to the undamaged single-strand DNA of the DNA repair bubble. Asp-77 provides a ligand contact to Mg(2+). Residues 79–785 (DAPLLKKQTL…LRLFGIPYIQ (707 aa)) form a spacer region region. 5 disordered regions span residues 306 to 342 (ESLP…PPSP), 354 to 385 (GSSS…SISP), 404 to 473 (CAGD…SVPK), 510 to 533 (HSDA…TNSV), and 667 to 724 (QAEF…AEDS). The segment covering 325-336 (PCEKLKTEKEPD) has biased composition (basic and acidic residues). Position 384 is a phosphoserine (Ser-384). Basic and acidic residues predominate over residues 454–472 (AEEHVASTNEGREPTDSVP). Ser-705 is modified (phosphoserine). The segment at 786-881 (APMEAEAQCA…VTAMEILNEF (96 aa)) is I-domain. Glu-789, Glu-791, Asp-810, and Asp-812 together coordinate Mg(2+). Residues 820–836 (HVYRNFFNKNKFVEYYQ) form a DNA-binding; may bind to the undamaged single-strand DNA of the DNA repair bubble region. Residues 848 to 880 (RNKLINLAYLLGSDYTEGIPTVGCVTAMEILNE) form a DNA-binding; H2TH (helix-2turn-helix) motif which binds double-stranded DNA region. A Mg(2+)-binding site is contributed by Asp-861. The tract at residues 912–918 (TKVKKKL) is DNA-binding; may bind double-stranded DNA. Residues 981–1009 (LKQLDAQQTQLRIDSFFRLAQQEKEDAKR) form an interaction with PCNA region. The interaction with ERCC6/CSB stretch occupies residues 1011 to 1186 (KSQRLNRAVT…RRARGRKRKT (176 aa)). Disordered regions lie at residues 1056-1081 (QKRG…SKGK) and 1095-1186 (ESSD…KRKT). The Nuclear localization signal 1 motif lies at 1057-1074 (KRGITNTLEESSSLKRKR). Residues 1124-1133 (TSASDSQNSV) are compositionally biased toward polar residues. Positions 1169–1186 (FGKKRRKLRRARGRKRKT) match the Nuclear localization signal 2 motif. The span at 1169-1186 (FGKKRRKLRRARGRKRKT) shows a compositional bias: basic residues.

The protein belongs to the XPG/RAD2 endonuclease family. XPG subfamily. As to quaternary structure, monomer. Homodimer. Component of the homologous recombination repair (HR) complex composed of ERCC5/XPG, BRCA2, PALB2, DSS1 and RAD51. Within the complex, interacts with BRCA2 and PALB2. Interacts with RNA polymerase II. Interacts (via C-terminus) with ERCC6/CSB; the interaction stimulates ERCC6/CSB binding to the DNA repair bubble and ERCC6/CSB ATPase activity. May form a complex composed of RNA polymerase II, ERCC6/CSB and ERCC5/XPG which associates with the DNA repair bubble during transcription-coupled nucleotide excision repair. Interacts with BRCA1; the interaction promotes the release of BRCA1 from DNA. Interacts with PCNA. Interacts with NTHL1; the interaction stimulates NTHL1 activity and NTHL1 binding to its DNA substrate. Mg(2+) is required as a cofactor.

The protein localises to the nucleus. It is found in the chromosome. Its function is as follows. Single-stranded structure-specific DNA endonuclease involved in DNA excision repair. Makes the 3'incision in DNA nucleotide excision repair (NER). Binds and bends DNA repair bubble substrate and breaks base stacking at the single-strand/double-strand DNA junction of the DNA bubble. Plays a role in base excision repair (BER) by promoting the binding of DNA glycosylase NTHL1 to its substrate and increasing NTHL1 catalytic activity that removes oxidized pyrimidines from DNA. Involved in transcription-coupled nucleotide excision repair (TCR) which allows RNA polymerase II-blocking lesions to be rapidly removed from the transcribed strand of active genes. Functions during the initial step of TCR in cooperation with ERCC6/CSB to recognized stalled RNA polymerase II. Also, stimulates ERCC6/CSB binding to the DNA repair bubble and ERCC6/CSB ATPase activity. Required for DNA replication fork maintenance and preservation of genomic stability. Involved in homologous recombination repair (HRR) induced by DNA replication stress by recruiting RAD51, BRCA2, and PALB2 to the damaged DNA site. In TFIIH stimulates the 5'-3' helicase activity of XPD/ERCC2 and the DNA translocase activity of XPB/ERCC3. During HRR, binds to the replication fork with high specificity and stabilizes it. Also, acts upstream of HRR, to promote the release of BRCA1 from DNA. The polypeptide is DNA excision repair protein ERCC-5 (ERCC5) (Homo sapiens (Human)).